Here is a 342-residue protein sequence, read N- to C-terminus: Protease HtpX homolog (342 aa).

Helical transmembrane passes span 6–26 (TAML…LIGG) and 28–48 (GGMM…YWNS). H130 serves as a coordination point for Zn(2+). E131 is a catalytic residue. H134 provides a ligand contact to Zn(2+). Transmembrane regions (helical) follow at residues 145–165 (ITAT…FFGG) and 173–193 (GGGI…AMLV). E202 lines the Zn(2+) pocket. The tract at residues 290-342 (PQHSKPAASGPWGSSAERSTDDPWGVKGGASTRSVPKIGRRGKDNDAPKGPWN) is disordered.

Belongs to the peptidase M48B family. Zn(2+) serves as cofactor.

It is found in the cell inner membrane. The sequence is that of Protease HtpX homolog from Allorhizobium ampelinum (strain ATCC BAA-846 / DSM 112012 / S4) (Agrobacterium vitis (strain S4)).